Reading from the N-terminus, the 118-residue chain is Protein TusC (118 aa).

This sequence belongs to the DsrF/TusC family. In terms of assembly, heterohexamer, formed by a dimer of trimers. The hexameric TusBCD complex contains 2 copies each of TusB, TusC and TusD. The TusBCD complex interacts with TusE.

It localises to the cytoplasm. In terms of biological role, part of a sulfur-relay system required for 2-thiolation of 5-methylaminomethyl-2-thiouridine (mnm(5)s(2)U) at tRNA wobble positions. In Salmonella gallinarum (strain 287/91 / NCTC 13346), this protein is Protein TusC.